The primary structure comprises 180 residues: Inosine/xanthosine triphosphatase (180 aa).

Threonine 8–lysine 13 is a substrate binding site. Mg(2+)-binding residues include aspartate 38 and glutamate 68. Glutamate 68–alanine 69 serves as a coordination point for substrate.

This sequence belongs to the YjjX NTPase family. As to quaternary structure, homodimer. Mg(2+) serves as cofactor. Mn(2+) is required as a cofactor.

The catalysed reaction is XTP + H2O = XDP + phosphate + H(+). The enzyme catalyses ITP + H2O = IDP + phosphate + H(+). Phosphatase that hydrolyzes non-canonical purine nucleotides such as XTP and ITP to their respective diphosphate derivatives. Probably excludes non-canonical purines from DNA/RNA precursor pool, thus preventing their incorporation into DNA/RNA and avoiding chromosomal lesions. In Yersinia pseudotuberculosis serotype IB (strain PB1/+), this protein is Inosine/xanthosine triphosphatase.